The chain runs to 251 residues: MRTGVIAKKVGMTRLFQEDGRHVPVTVLSLENCQVVSVRTAERDGYVALQLGAGEAKQKNVAKPQREHFAKAEVPLKMEVAEFRVADDALLDVGSTIAASHFVPGQYVDITGQTQGKGFQGAMKRWGFGGMRATHGVSISHRAHGSTGNRQDPGRVFKNKKMAGHMGDRQRTQQNLEVVRTDDERGLIFVKGSVPGSKNAWLLVRDAVKVSRHAEAPYPAGLKQAANSNDSAAADTPAEVAAVEATEGQEG.

Residue glutamine 151 is modified to N5-methylglutamine. Positions 221–251 (GLKQAANSNDSAAADTPAEVAAVEATEGQEG) are disordered. Residues 225-251 (AANSNDSAAADTPAEVAAVEATEGQEG) are compositionally biased toward low complexity.

Belongs to the universal ribosomal protein uL3 family. As to quaternary structure, part of the 50S ribosomal subunit. Forms a cluster with proteins L14 and L19. In terms of processing, methylated by PrmB.

Functionally, one of the primary rRNA binding proteins, it binds directly near the 3'-end of the 23S rRNA, where it nucleates assembly of the 50S subunit. The sequence is that of Large ribosomal subunit protein uL3 from Novosphingobium aromaticivorans (strain ATCC 700278 / DSM 12444 / CCUG 56034 / CIP 105152 / NBRC 16084 / F199).